We begin with the raw amino-acid sequence, 508 residues long: Bifunctional purine biosynthesis protein PurH (508 aa).

Residues 1 to 144 enclose the MGS-like domain; the sequence is MTRALLSVSD…KNFASVLPIV (144 aa).

The protein belongs to the PurH family.

The catalysed reaction is (6R)-10-formyltetrahydrofolate + 5-amino-1-(5-phospho-beta-D-ribosyl)imidazole-4-carboxamide = 5-formamido-1-(5-phospho-D-ribosyl)imidazole-4-carboxamide + (6S)-5,6,7,8-tetrahydrofolate. It catalyses the reaction IMP + H2O = 5-formamido-1-(5-phospho-D-ribosyl)imidazole-4-carboxamide. The protein operates within purine metabolism; IMP biosynthesis via de novo pathway; 5-formamido-1-(5-phospho-D-ribosyl)imidazole-4-carboxamide from 5-amino-1-(5-phospho-D-ribosyl)imidazole-4-carboxamide (10-formyl THF route): step 1/1. It functions in the pathway purine metabolism; IMP biosynthesis via de novo pathway; IMP from 5-formamido-1-(5-phospho-D-ribosyl)imidazole-4-carboxamide: step 1/1. This chain is Bifunctional purine biosynthesis protein PurH, found in Leuconostoc mesenteroides subsp. mesenteroides (strain ATCC 8293 / DSM 20343 / BCRC 11652 / CCM 1803 / JCM 6124 / NCDO 523 / NBRC 100496 / NCIMB 8023 / NCTC 12954 / NRRL B-1118 / 37Y).